A 451-amino-acid chain; its full sequence is Chromosomal replication initiator protein DnaA (451 aa).

The interval 1-71 (MSEKEIWDKV…QAIIYDVIGY (71 aa)) is domain I, interacts with DnaA modulators. The domain II stretch occupies residues 71 to 112 (YEVKPHFISEDELASYNNVNTQEVQEPQVQHSSIDDKTWGKE). Residues 113–329 (QFNMHNTFDT…GALTRLLAYS (217 aa)) are domain III, AAA+ region. 4 residues coordinate ATP: Gly-157, Gly-159, Lys-160, and Thr-161. A domain IV, binds dsDNA region spans residues 330–451 (KLQGKPITTE…ENLEKEIRNQ (122 aa)).

The protein belongs to the DnaA family. Oligomerizes as a right-handed, spiral filament on DNA at oriC.

The protein localises to the cytoplasm. In terms of biological role, plays an essential role in the initiation and regulation of chromosomal replication. ATP-DnaA binds to the origin of replication (oriC) to initiate formation of the DNA replication initiation complex once per cell cycle. Binds the DnaA box (a 9 base pair repeat at the origin) and separates the double-stranded (ds)DNA. Forms a right-handed helical filament on oriC DNA; dsDNA binds to the exterior of the filament while single-stranded (ss)DNA is stabiized in the filament's interior. The ATP-DnaA-oriC complex binds and stabilizes one strand of the AT-rich DNA unwinding element (DUE), permitting loading of DNA polymerase. After initiation quickly degrades to an ADP-DnaA complex that is not apt for DNA replication. Binds acidic phospholipids. In Staphylococcus epidermidis (strain ATCC 12228 / FDA PCI 1200), this protein is Chromosomal replication initiator protein DnaA.